We begin with the raw amino-acid sequence, 476 residues long: Neuropeptide-like precursor 1 (476 aa).

A signal peptide spans 1–34 (MNDAGASIGRHRGCLLLFVALAVAFSSYVEQVES). Val-133 bears the Valine amide mark. Propeptides lie at residues 160-232 (DEAT…NSYF) and 259-476 (YVMP…RKNQ). Disordered stretches follow at residues 275–298 (QNDI…DGEV) and 360–385 (PEVE…SHPT). Over residues 286-297 (DDDDDDDDDDGE) the composition is skewed to acidic residues.

Neuropeptide-like precursor 1-1: Expressed in antennal lobe (AL), corpora cardiaca (CC), corpora allata (CA) and gnathal ganglion (GNG) (at protein level). Expression in AL detected in all animals, in GNG in most animals, expression in CC and CA in few animals (at protein level). Neuropeptide-like precursor 1-2: Expressed in antennal lobe (AL), corpora cardiaca (CC), corpora allata (CA) and gnathal ganglion (GNG) (at protein level). Expression in AL detected in all animals, in GNG in some animals, expression in CC and CA in few animals (at protein level). Neuropeptide-like precursor 1-3: Not expressed in antennal lobe (AL), corpora cardiaca (CC), corpora allata (CA) and gnathal ganglion (GNG) (at protein level). Neuropeptide-like precursor 1-4: Expressed in antennal lobe (AL) and gnathal ganglion (GNG) (at protein level). Expression in AL detected in most animals, in GNG in some animals (at protein level). Not expressed in CC and CA (at protein level). YRVamide: Expressed in antennal lobe (AL), corpora cardiaca (CC), corpora allata (CA) and gnathal ganglion (GNG) (at protein level). Expression in AL and GNG detected in most animals, expression in CC and CA in few animals (at protein level). Extended YRVamide: Expressed in antennal lobe (AL) and gnathal ganglion (GNG) (at protein level). Expression in AL detected in most animals, in GNG in some animals (at protein level). Not expressed in corpora cardiaca (CC) and corpora allata (CA) (at protein level). Neuropeptide-like precursor 1-6: Expressed in antennal lobe (AL), corpora cardiaca (CC), corpora allata (CA) and gnathal ganglion (GNG) (at protein level). Expression in GNG detected in all animals, expression in AL in most animals, in CC and CA in few animals (at protein level). Neuropeptide-like precursor 1-6(1-11): Expressed in antennal lobe (AL) and gnathal ganglion (GNG) in most animals (at protein level). Not expressed in corpora cardiaca (CC) and corpora allata (CA) (at protein level). Neuropeptide-like precursor 1-9: Expressed in antennal lobe (AL) and gnathal ganglion (GNG) (at protein level). Expression in AL detected in all animals in GNG in most (at protein level). Not expressed in corpora cardiaca (CC) and corpora allata (CA) (at protein level).

Its subcellular location is the secreted. This chain is Neuropeptide-like precursor 1, found in Agrotis ipsilon (Black cutworm moth).